The chain runs to 391 residues: Ectodysplasin-A (391 aa).

The span at 1 to 21 (MGYPEVERREPLPAAAPRERG) shows a compositional bias: basic and acidic residues. Positions 1–28 (MGYPEVERREPLPAAAPRERGSQGCGCR) are disordered. Residues 1–41 (MGYPEVERREPLPAAAPRERGSQGCGCRGAPARAGEGNSCR) lie on the Cytoplasmic side of the membrane. The chain crosses the membrane as a helical; Signal-anchor for type II membrane protein span at residues 42–62 (LFLGFFGLSLALHLLTLCCYL). Residues 63 to 391 (ELRSELRRER…AIRLGEAPAS (329 aa)) are Extracellular-facing. Disordered stretches follow at residues 72 to 129 (RGTE…DSQD) and 146 to 244 (YSEE…TGTR). Positions 86 to 96 (TSGTLSSPGSL) are enriched in low complexity. The Collagen-like domain maps to 180-229 (GPPGPNGPPGPPGPPGPQGPPGIPGIPGIPGTTVMGPPGPPGPPGPQGPP). Composition is skewed to pro residues over residues 181 to 203 (PPGP…PGIP) and 216 to 228 (PPGP…PQGP). Residues 249-385 (AVVHLQGQGS…HTTFFGAIRL (137 aa)) form the THD domain. The N-linked (GlcNAc...) asparagine glycan is linked to Asn313. Cys332 and Cys346 are disulfide-bonded. An N-linked (GlcNAc...) asparagine glycan is attached at Asn372.

This sequence belongs to the tumor necrosis factor family. As to quaternary structure, homotrimer. The homotrimers may then dimerize and form higher-order oligomers. N-glycosylated. Post-translationally, processing by furin produces a secreted form.

It is found in the cell membrane. The protein resides in the secreted. Its function is as follows. Cytokine which is involved in epithelial-mesenchymal signaling during morphogenesis of ectodermal organs. Functions as a ligand activating the DEATH-domain containing receptors EDAR and EDA2R. Isoform TAA binds only to the receptor EDAR, while isoform TA-A2 binds exclusively to the receptor EDA2R. May also play a role in cell adhesion. Isoform TAA binds only to the receptor EDAR, while isoform TA-A2 binds exclusively to the receptor EDA2R. Functionally, isoform TA-A2 binds exclusively to the receptor EDA2R. The chain is Ectodysplasin-A (Eda) from Mus musculus (Mouse).